Here is a 123-residue protein sequence, read N- to C-terminus: MRRLYNFLSNSEKRNLRNRKKLNSGVKRLRISIFKSNRHFYAQLINDEKGVTLTSVSTLDAKIKDVCKRGINTETIKQVSSLMIERLSNMKLEQKLVFDRGAYKYTGLVSQFAEALRSSGFKF.

Belongs to the universal ribosomal protein uL18 family. As to quaternary structure, part of the 50S ribosomal subunit; part of the 5S rRNA/L5/L18/L25 subcomplex. Contacts the 5S and 23S rRNAs.

In terms of biological role, this is one of the proteins that bind and probably mediate the attachment of the 5S RNA into the large ribosomal subunit, where it forms part of the central protuberance. The protein is Large ribosomal subunit protein uL18 of Wolbachia sp. subsp. Brugia malayi (strain TRS).